A 778-amino-acid chain; its full sequence is Kin of IRRE-like protein 3 (778 aa).

The signal sequence occupies residues 1 to 21 (MRPFQLDLLFLCFFLFSQELG). Topologically, residues 22 to 535 (LQKRGCCLVL…GLEAESVPMA (514 aa)) are extracellular. Ig-like C2-type domains lie at 48–142 (YSFS…ARLT), 147–243 (PDDP…TSVT), 249–330 (PPLV…RTVD), 335–415 (PRMT…VTLT), and 419–515 (PPII…IRLK). A disulfide bridge connects residues C69 and C127. A glycan (N-linked (GlcNAc...) asparagine) is linked at N167. A disulfide bridge links C170 with C227. N-linked (GlcNAc...) asparagine glycosylation is present at N253. C271 and C314 are oxidised to a cystine. Residue N324 is glycosylated (N-linked (GlcNAc...) asparagine). Cystine bridges form between C356/C398 and C440/C499. An N-linked (GlcNAc...) asparagine glycan is attached at N498. Residues 536–556 (VIIGVAVGAGVAFLVLMATIV) traverse the membrane as a helical segment. Residues 557–778 (AFCCARSQRN…PLQRRMQTHV (222 aa)) lie on the Cytoplasmic side of the membrane. A compositionally biased stretch (polar residues) spans 727–736 (CDSSVSSSGK). The tract at residues 727–778 (CDSSVSSSGKQDGYVQFDKASKASASSSHHSQSSSQNSDPSRPLQRRMQTHV) is disordered. The span at 748 to 762 (KASASSSHHSQSSSQ) shows a compositional bias: low complexity.

The protein belongs to the immunoglobulin superfamily. In terms of assembly, homodimer; mediates homophilic interactions to promote cell adhesion. Interacts with NPHS1; forms heterodimers with NPHS1. Interacts with NPHS2/podocin (via the C-terminus). Interacts with CASK. Interacts (via extracellular region) with MAP1B. Interacts (via extracellular region) with MYO16. Interacts (via intracellular region) with ATP1B1. Interacts (via intracellular region) with SHMT2. Interacts (via intracellular region) with UFC1. In terms of processing, undergoes proteolysis by a metalloprotease and gives rise to a soluble form. As to expression, expressed mainly in adult brain, bone marrow and stromal cells. Expressed in diverse regions of the brain, including the cortex, hippocampus, striatum, olfactory bulb and cerebellum. In brain, expressed in pontine nucleus neurons (at protein level). In hippocampus, produced in both the dentate granule neurons and the GABAergic neurons, but not the CA3 neurons. Expressed in subpopulations of vomeronasal sensory neurons. Expressed in a subset of neurons in dorsal root ganglia.

The protein resides in the cell membrane. The protein localises to the cell projection. It localises to the axon. Its subcellular location is the dendrite. It is found in the secreted. In terms of biological role, synaptic adhesion molecule required for the formation of target-specific synapses. Required for formation of target-specific synapses at hippocampal mossy fiber synapses. Required for formation of mossy fiber filopodia, the synaptic structures connecting dentate granule and GABA neurons. Probably acts as a homophilic adhesion molecule that promotes trans-cellular interactions and stabilize mossy fiber filipodia contact and subsequent synapse formation. Required for the coalescence of vomeronasal sensory neuron axons. May be involved in the hematopoietic supportive capacity of stroma cells; the secreted extracellular domain is directly responsible for supporting hematopoietic stem cells. The protein is Kin of IRRE-like protein 3 (Kirrel3) of Mus musculus (Mouse).